The sequence spans 235 residues: Peptidyl-tRNA hydrolase (235 aa).

A tRNA-binding site is contributed by Y14. The Proton acceptor role is filled by H19. TRNA-binding residues include F64, N66, and N112. Residues 186–235 are disordered; the sequence is RTAPPRSSGGSPKTDKPAKATREPPPAAKPEATPEEETRSPLQRLVDKFR. Residues 198–207 are compositionally biased toward basic and acidic residues; sequence KTDKPAKATR.

Belongs to the PTH family. In terms of assembly, monomer.

The protein localises to the cytoplasm. The catalysed reaction is an N-acyl-L-alpha-aminoacyl-tRNA + H2O = an N-acyl-L-amino acid + a tRNA + H(+). Its function is as follows. Hydrolyzes ribosome-free peptidyl-tRNAs (with 1 or more amino acids incorporated), which drop off the ribosome during protein synthesis, or as a result of ribosome stalling. Catalyzes the release of premature peptidyl moieties from peptidyl-tRNA molecules trapped in stalled 50S ribosomal subunits, and thus maintains levels of free tRNAs and 50S ribosomes. The polypeptide is Peptidyl-tRNA hydrolase (Dinoroseobacter shibae (strain DSM 16493 / NCIMB 14021 / DFL 12)).